Reading from the N-terminus, the 131-residue chain is Glycine cleavage system H protein (131 aa).

In terms of domain architecture, Lipoyl-binding spans 24–106; the sequence is RVTVGISDHA…YGEGWIFVVE (83 aa). N6-lipoyllysine is present on Lys65.

This sequence belongs to the GcvH family. The glycine cleavage system is composed of four proteins: P, T, L and H. (R)-lipoate is required as a cofactor.

In terms of biological role, the glycine cleavage system catalyzes the degradation of glycine. The H protein shuttles the methylamine group of glycine from the P protein to the T protein. In Xanthomonas campestris pv. campestris (strain 8004), this protein is Glycine cleavage system H protein.